The sequence spans 180 residues: Inner membrane-spanning protein YciB (180 aa).

The next 6 helical transmembrane spans lie at 4–24, 25–45, 49–69, 76–96, 118–138, and 150–170; these read LLSEIGPVIAFFAGFFYGGGI, QHATLYMLITSVICITLCYVI, VSKLSIISTTVLLVSGSITLI, IKIKPTILYVIFGIIFLMSGI, ITLSYRTAAFFFFMAVVNEVV, and FKVFGVIPITFIFILLQLPLL.

The protein belongs to the YciB family.

It is found in the cell inner membrane. Plays a role in cell envelope biogenesis, maintenance of cell envelope integrity and membrane homeostasis. This Rickettsia africae (strain ESF-5) protein is Inner membrane-spanning protein YciB.